The primary structure comprises 456 residues: CCA-adding enzyme (456 aa).

The ATP site is built by Ser53 and Lys56. CTP-binding residues include Ser53 and Lys56. Mg(2+) is bound by residues Asp65, Asp67, and Asp119. His142, Lys161, and Tyr170 together coordinate ATP. The CTP site is built by His142, Lys161, and Tyr170.

It belongs to the tRNA nucleotidyltransferase/poly(A) polymerase family. Archaeal CCA-adding enzyme subfamily. Homodimer. Mg(2+) is required as a cofactor.

It carries out the reaction a tRNA precursor + 2 CTP + ATP = a tRNA with a 3' CCA end + 3 diphosphate. The catalysed reaction is a tRNA with a 3' CCA end + 2 CTP + ATP = a tRNA with a 3' CCACCA end + 3 diphosphate. Its function is as follows. Catalyzes the addition and repair of the essential 3'-terminal CCA sequence in tRNAs without using a nucleic acid template. Adds these three nucleotides in the order of C, C, and A to the tRNA nucleotide-73, using CTP and ATP as substrates and producing inorganic pyrophosphate. tRNA 3'-terminal CCA addition is required both for tRNA processing and repair. Also involved in tRNA surveillance by mediating tandem CCA addition to generate a CCACCA at the 3' terminus of unstable tRNAs. While stable tRNAs receive only 3'-terminal CCA, unstable tRNAs are marked with CCACCA and rapidly degraded. The protein is CCA-adding enzyme of Thermococcus kodakarensis (strain ATCC BAA-918 / JCM 12380 / KOD1) (Pyrococcus kodakaraensis (strain KOD1)).